The sequence spans 41 residues: Large ribosomal subunit protein bL36 (41 aa).

It belongs to the bacterial ribosomal protein bL36 family.

In Ruegeria sp. (strain TM1040) (Silicibacter sp.), this protein is Large ribosomal subunit protein bL36.